A 239-amino-acid chain; its full sequence is RNA polymerase sigma-35 factor (239 aa).

Residues 1–27 constitute a propeptide that is removed on maturation; sequence MMKLKFYLVYLWYKVLLKLGIKTDEIY. The short motif at 86–99 is the Polymerase core binding element; the sequence is DLISIGTIGLIKAV. Positions 206–225 form a DNA-binding region, H-T-H motif; that stretch reads QKDVADMLGISQSYISRLEK.

The protein belongs to the sigma-70 factor family. Post-translationally, proteolytically cleaved in the N-terminus probably by a SpoIIGA homolog to yield the active peptide.

Sigma factors are initiation factors that promote the attachment of RNA polymerase to specific initiation sites and are then released. This sigma factor directs the transcription of crystal protein genes, a sporulation-regulated event. This is RNA polymerase sigma-35 factor (sigE) from Bacillus anthracis.